The following is a 297-amino-acid chain: Light-independent protochlorophyllide reductase iron-sulfur ATP-binding protein (297 aa).

ATP contacts are provided by residues 41-46 and lysine 70; that span reads GIGKST. Serine 45 provides a ligand contact to Mg(2+). Residues cysteine 126 and cysteine 160 each contribute to the [4Fe-4S] cluster site. ATP-binding positions include 211–212 and 235–237; these read NR and PDL.

It belongs to the NifH/BchL/ChlL family. As to quaternary structure, homodimer. Protochlorophyllide reductase is composed of three subunits; BchL, BchN and BchB. [4Fe-4S] cluster serves as cofactor.

The enzyme catalyses chlorophyllide a + oxidized 2[4Fe-4S]-[ferredoxin] + 2 ADP + 2 phosphate = protochlorophyllide a + reduced 2[4Fe-4S]-[ferredoxin] + 2 ATP + 2 H2O. It participates in porphyrin-containing compound metabolism; bacteriochlorophyll biosynthesis (light-independent). Its function is as follows. Component of the dark-operative protochlorophyllide reductase (DPOR) that uses Mg-ATP and reduced ferredoxin to reduce ring D of protochlorophyllide (Pchlide) to form chlorophyllide a (Chlide). This reaction is light-independent. The L component serves as a unique electron donor to the NB-component of the complex, and binds Mg-ATP. The chain is Light-independent protochlorophyllide reductase iron-sulfur ATP-binding protein from Methylobacterium radiotolerans (strain ATCC 27329 / DSM 1819 / JCM 2831 / NBRC 15690 / NCIMB 10815 / 0-1).